Reading from the N-terminus, the 278-residue chain is Protein Rv2133c (278 aa).

The protein is Protein Rv2133c of Mycobacterium tuberculosis (strain ATCC 25618 / H37Rv).